Consider the following 467-residue polypeptide: DEAD-box ATP-dependent RNA helicase CshA (467 aa).

Residues 2 to 30 (TTFQELGLSQEVMKAIERMGFEETTPIQA) carry the Q motif motif. Residues 33–203 (IPLSLQNKDV…ERFMNEPELV (171 aa)) form the Helicase ATP-binding domain. 46 to 53 (AQTGTGKT) contributes to the ATP binding site. The DEAD box motif lies at 151-154 (DEAD). In terms of domain architecture, Helicase C-terminal spans 214 to 374 (NIQQYYLEVH…RMKPPTLDEA (161 aa)). Residues 428 to 467 (TTPVQLTEEPPLAVKREKKRGGRPDGSARSRTKKRRITAH) are disordered. The span at 457–467 (SRTKKRRITAH) shows a compositional bias: basic residues.

It belongs to the DEAD box helicase family. CshA subfamily. As to quaternary structure, oligomerizes, may be a member of the RNA degradosome.

The protein localises to the cytoplasm. The catalysed reaction is ATP + H2O = ADP + phosphate + H(+). Functionally, DEAD-box RNA helicase possibly involved in RNA degradation. Unwinds dsRNA in both 5'- and 3'-directions, has RNA-dependent ATPase activity. The sequence is that of DEAD-box ATP-dependent RNA helicase CshA from Geobacillus kaustophilus (strain HTA426).